The following is a 1785-amino-acid chain: 1,3-beta-glucan synthase component FKS3 (1785 aa).

Transmembrane regions (helical) follow at residues 337–357 (FWII…PTLY), 375–395 (LSVI…ATVF), 415–435 (IGLL…LGFF), 444–464 (AYIV…FFAV), 508–528 (LWVF…TLSL), 547–567 (YLLG…LMLL), 572–592 (LFFL…SIVL), and 712–732 (LATP…TVLV). 2 stretches are compositionally biased toward basic and acidic residues: residues 791-801 (ESSHDEDRLEI) and 815-824 (DHTESRKLPT). A disordered region spans residues 791-824 (ESSHDEDRLEIPDALYDPRSSPLSDHTESRKLPT). Residues N844, N874, N955, N1002, and N1170 are each glycosylated (N-linked (GlcNAc...) asparagine). The next 3 helical transmembrane spans lie at 1215–1235 (LFIS…GALN), 1268–1288 (VSIF…PLLI), and 1303–1323 (FLHH…QVYS). A glycan (N-linked (GlcNAc...) asparagine) is linked at N1360. A run of 5 helical transmembrane segments spans residues 1370–1390 (FFML…WFWI), 1394–1414 (SMCF…DFFI), 1475–1495 (FAEL…FSFI), 1514–1534 (LLVT…LFWV), and 1549–1569 (AGAV…LLDF). N1579 carries an N-linked (GlcNAc...) asparagine glycan. 3 consecutive transmembrane segments (helical) span residues 1585–1605 (ILLI…TTIF), 1655–1675 (FFLG…PFID), and 1713–1733 (FSLY…PFFA). N1761 carries N-linked (GlcNAc...) asparagine glycosylation.

This sequence belongs to the glycosyltransferase 48 family. In terms of processing, N-glycosylated.

It localises to the mitochondrion. It is found in the membrane. It carries out the reaction [(1-&gt;3)-beta-D-glucosyl](n) + UDP-alpha-D-glucose = [(1-&gt;3)-beta-D-glucosyl](n+1) + UDP + H(+). Required for spore wall assembly. In Saccharomyces cerevisiae (strain ATCC 204508 / S288c) (Baker's yeast), this protein is 1,3-beta-glucan synthase component FKS3 (FKS3).